The primary structure comprises 447 residues: Phosphatidylinositol 4-kinase type 2-alpha (447 aa).

The tract at residues 1–77 is disordered; sequence MDETSPLVSP…HRNEFPEDPE (77 aa). A compositionally biased stretch (basic and acidic residues) spans 48–77; that stretch reads RSRERQPLLDRDRGASPRDPHRNEFPEDPE. Residues 92 to 421 enclose the PI3K/PI4K catalytic domain; sequence GIYPERIYQG…VQMPPVIVET (330 aa). The G-loop stretch occupies residues 98–104; the sequence is IYQGSSG. Residues 99–105 and Lys120 contribute to the ATP site; that span reads YQGSSGS. Residues 125–127 are important for substrate binding; sequence EPY. Residues 133–146 are important for interaction with membranes; the sequence is KWTKWLQKLCCPCC. Residues Cys142, Cys143, Cys145, and Cys146 are each lipidated (S-palmitoyl cysteine). An ATP-binding site is contributed by 229–232; it reads QIFV. Residues 236 to 244 form an important for interaction with membranes region; that stretch reads KDADFWLRR. The segment at 273 to 281 is catalytic loop; it reads RNTDRGNDN. An activation loop region spans residues 312–332; sequence AIDNGLAFPLKHPDSWRAYPF. Residue Asp314 coordinates ATP. The tract at residues 327–336 is important for interaction with membranes; sequence WRAYPFYWAW.

Belongs to the PI3/PI4-kinase family. Type II PI4K subfamily.

The protein localises to the golgi apparatus. It localises to the trans-Golgi network membrane. The protein resides in the membrane raft. Its subcellular location is the endosome. It is found in the cytoplasmic vesicle. The protein localises to the cell projection. It localises to the dendrite. The protein resides in the presynaptic cell membrane. Its subcellular location is the synapse. It is found in the synaptosome. The protein localises to the mitochondrion. It localises to the membrane. The protein resides in the cell membrane. Its subcellular location is the perikaryon. It is found in the neuron projection. The enzyme catalyses a 1,2-diacyl-sn-glycero-3-phospho-(1D-myo-inositol) + ATP = a 1,2-diacyl-sn-glycero-3-phospho-(1D-myo-inositol 4-phosphate) + ADP + H(+). In terms of biological role, membrane-bound phosphatidylinositol-4 kinase (PI4-kinase) that catalyzes the phosphorylation of phosphatidylinositol (PI) to phosphatidylinositol 4-phosphate (PI4P), a lipid that plays important roles in endocytosis, Golgi function, protein sorting and membrane trafficking. Besides, phosphorylation of phosphatidylinositol (PI) to phosphatidylinositol 4-phosphate (PI4P) is the first committed step in the generation of phosphatidylinositol 4,5-bisphosphate (PIP2), a precursor of the second messenger inositol 1,4,5-trisphosphate (InsP3). The sequence is that of Phosphatidylinositol 4-kinase type 2-alpha (pi4k2a) from Danio rerio (Zebrafish).